The chain runs to 467 residues: Glutamate--tRNA ligase (467 aa).

Residues 9 to 19 carry the 'HIGH' region motif; it reads PSPTGYLHIGG. Positions 237-241 match the 'KMSKS' region motif; sequence KLSKR. Residue Lys-240 coordinates ATP.

Belongs to the class-I aminoacyl-tRNA synthetase family. Glutamate--tRNA ligase type 1 subfamily. As to quaternary structure, monomer.

It localises to the cytoplasm. It catalyses the reaction tRNA(Glu) + L-glutamate + ATP = L-glutamyl-tRNA(Glu) + AMP + diphosphate. Its function is as follows. Catalyzes the attachment of glutamate to tRNA(Glu) in a two-step reaction: glutamate is first activated by ATP to form Glu-AMP and then transferred to the acceptor end of tRNA(Glu). This is Glutamate--tRNA ligase from Xylella fastidiosa (strain M23).